The chain runs to 340 residues: tRNA N6-adenosine threonylcarbamoyltransferase (340 aa).

Residues His-114 and His-118 each coordinate Fe cation. Substrate-binding positions include 140–144, Asp-173, Gly-186, Asp-190, and Asn-281; that span reads TISGG. Asp-309 contributes to the Fe cation binding site.

It belongs to the KAE1 / TsaD family. Fe(2+) is required as a cofactor.

The protein resides in the cytoplasm. It catalyses the reaction L-threonylcarbamoyladenylate + adenosine(37) in tRNA = N(6)-L-threonylcarbamoyladenosine(37) in tRNA + AMP + H(+). In terms of biological role, required for the formation of a threonylcarbamoyl group on adenosine at position 37 (t(6)A37) in tRNAs that read codons beginning with adenine. Is involved in the transfer of the threonylcarbamoyl moiety of threonylcarbamoyl-AMP (TC-AMP) to the N6 group of A37, together with TsaE and TsaB. TsaD likely plays a direct catalytic role in this reaction. This is tRNA N6-adenosine threonylcarbamoyltransferase from Christiangramia forsetii (strain DSM 17595 / CGMCC 1.15422 / KT0803) (Gramella forsetii).